A 229-amino-acid chain; its full sequence is 7-cyano-7-deazaguanine synthase (229 aa).

15-25 (LSGGLDSATVV) lines the ATP pocket. Positions 194, 204, 207, and 210 each coordinate Zn(2+).

It belongs to the QueC family. Zn(2+) is required as a cofactor.

The catalysed reaction is 7-carboxy-7-deazaguanine + NH4(+) + ATP = 7-cyano-7-deazaguanine + ADP + phosphate + H2O + H(+). Its pathway is purine metabolism; 7-cyano-7-deazaguanine biosynthesis. Its function is as follows. Catalyzes the ATP-dependent conversion of 7-carboxy-7-deazaguanine (CDG) to 7-cyano-7-deazaguanine (preQ(0)). This Pseudomonas syringae pv. syringae (strain B728a) protein is 7-cyano-7-deazaguanine synthase.